The primary structure comprises 346 residues: tRNA N6-adenosine threonylcarbamoyltransferase (346 aa).

2 residues coordinate Fe cation: His-111 and His-115. Substrate is bound by residues Leu-134–Gly-138, Asp-167, Gly-180, Asp-184, and Asn-279. Position 307 (Asp-307) interacts with Fe cation.

This sequence belongs to the KAE1 / TsaD family. Fe(2+) serves as cofactor.

The protein localises to the cytoplasm. The enzyme catalyses L-threonylcarbamoyladenylate + adenosine(37) in tRNA = N(6)-L-threonylcarbamoyladenosine(37) in tRNA + AMP + H(+). In terms of biological role, required for the formation of a threonylcarbamoyl group on adenosine at position 37 (t(6)A37) in tRNAs that read codons beginning with adenine. Is involved in the transfer of the threonylcarbamoyl moiety of threonylcarbamoyl-AMP (TC-AMP) to the N6 group of A37, together with TsaE and TsaB. TsaD likely plays a direct catalytic role in this reaction. The protein is tRNA N6-adenosine threonylcarbamoyltransferase of Nostoc sp. (strain PCC 7120 / SAG 25.82 / UTEX 2576).